The following is a 467-amino-acid chain: ATP synthase subunit beta (467 aa).

Residue 150 to 157 (GGAGVGKT) coordinates ATP.

It belongs to the ATPase alpha/beta chains family. As to quaternary structure, F-type ATPases have 2 components, CF(1) - the catalytic core - and CF(0) - the membrane proton channel. CF(1) has five subunits: alpha(3), beta(3), gamma(1), delta(1), epsilon(1). CF(0) has three main subunits: a(1), b(2) and c(9-12). The alpha and beta chains form an alternating ring which encloses part of the gamma chain. CF(1) is attached to CF(0) by a central stalk formed by the gamma and epsilon chains, while a peripheral stalk is formed by the delta and b chains.

Its subcellular location is the cell inner membrane. The enzyme catalyses ATP + H2O + 4 H(+)(in) = ADP + phosphate + 5 H(+)(out). Produces ATP from ADP in the presence of a proton gradient across the membrane. The catalytic sites are hosted primarily by the beta subunits. In Vibrio parahaemolyticus serotype O3:K6 (strain RIMD 2210633), this protein is ATP synthase subunit beta.